Consider the following 444-residue polypeptide: MSQSYINVIGAGLAGSEAAYQIAKRGIPVKLYEMRGVKSTPQHKTDNFAELVCSNSFRGDSLTNAVGLLKEEMRRLDSIIMRNGEAHRVPAGGAMAVDREGYSEAVTEEIHKHPLIEVIRDEITDIPGDAITVIATGPLTSDSLAAKIHELNGGDGFYFYDAAAPIVDKNTIDMNKVYLKSRYDKGEAAYLNCPMTKEEFMAFHEALTTAEEAPLNSFEKEKYFEGCMPIEVMAKRGIKTMLYGPMKPVGLEYPEDYKGPRDGEFKTPYAVVQLRQDNAAGSLYNIVGFQTHLKWGEQKRVFQMIPGLENAEFVRYGVMHRNSYMDSPNLLDQTFATRKNPNLFFAGQMTGVEGYVESAASGLVAGINAARRFNGESEVVFPQTTAIGALPHYITHTDSKHFQPMNVNFGIIKELEGPRIRDKKERYEAIATRALKDLEKFLNY.

Residue 10–15 (GAGLAG) participates in FAD binding.

The protein belongs to the MnmG family. TrmFO subfamily. Requires FAD as cofactor.

Its subcellular location is the cytoplasm. The catalysed reaction is uridine(54) in tRNA + (6R)-5,10-methylene-5,6,7,8-tetrahydrofolate + NADH + H(+) = 5-methyluridine(54) in tRNA + (6S)-5,6,7,8-tetrahydrofolate + NAD(+). The enzyme catalyses uridine(54) in tRNA + (6R)-5,10-methylene-5,6,7,8-tetrahydrofolate + NADPH + H(+) = 5-methyluridine(54) in tRNA + (6S)-5,6,7,8-tetrahydrofolate + NADP(+). Catalyzes the folate-dependent formation of 5-methyl-uridine at position 54 (M-5-U54) in all tRNAs. This Streptococcus agalactiae serotype III (strain NEM316) protein is Methylenetetrahydrofolate--tRNA-(uracil-5-)-methyltransferase TrmFO.